We begin with the raw amino-acid sequence, 686 residues long: Methionine--tRNA ligase (686 aa).

A 'HIGH' region motif is present at residues 15–25; the sequence is PYANGSIHLGH. Zn(2+) is bound by residues cysteine 146, cysteine 149, cysteine 159, and cysteine 162. A 'KMSKS' region motif is present at residues 332–336; sequence KMSKS. ATP is bound at residue lysine 335. One can recognise a tRNA-binding domain in the interval 585-686; that stretch reads AFEAVDMRIA…EGAQPGMRVM (102 aa).

The protein belongs to the class-I aminoacyl-tRNA synthetase family. MetG type 1 subfamily. As to quaternary structure, homodimer. The cofactor is Zn(2+).

It is found in the cytoplasm. The enzyme catalyses tRNA(Met) + L-methionine + ATP = L-methionyl-tRNA(Met) + AMP + diphosphate. Is required not only for elongation of protein synthesis but also for the initiation of all mRNA translation through initiator tRNA(fMet) aminoacylation. In Aliivibrio fischeri (strain MJ11) (Vibrio fischeri), this protein is Methionine--tRNA ligase.